The sequence spans 262 residues: NAD-dependent glucose-6-phosphate dehydrogenase (262 aa).

NAD(+) is bound by residues Asn90, Ser115, Tyr152, and Lys156. Residue Tyr152 is the Proton acceptor of the active site.

The protein belongs to the NAD(P)-dependent epimerase/dehydratase family. Homodimer.

It catalyses the reaction D-glucose 6-phosphate + NAD(+) = 6-phospho-D-glucono-1,5-lactone + NADH + H(+). Its pathway is carbohydrate degradation; pentose phosphate pathway. Its function is as follows. Catalyzes the NAD-dependent oxidation of glucose 6-phosphate to 6-phosphogluconolactone. The chain is NAD-dependent glucose-6-phosphate dehydrogenase from Haloferax volcanii (strain ATCC 29605 / DSM 3757 / JCM 8879 / NBRC 14742 / NCIMB 2012 / VKM B-1768 / DS2) (Halobacterium volcanii).